A 331-amino-acid polypeptide reads, in one-letter code: D-alanine--D-alanine ligase (331 aa).

The ATP-grasp domain occupies 122 to 328; that stretch reads KLWYDAIGIP…FHEFLADCIE (207 aa). An ATP-binding site is contributed by 152 to 207; it reads AFDKWGKLFVKAARQGSSVGCYSVTKIEQLSDAIDKAFGFSHQVLVEKAVKPRELE. Residues Asp-282, Glu-295, and Asn-297 each contribute to the Mg(2+) site.

This sequence belongs to the D-alanine--D-alanine ligase family. It depends on Mg(2+) as a cofactor. Mn(2+) serves as cofactor.

It is found in the cytoplasm. The enzyme catalyses 2 D-alanine + ATP = D-alanyl-D-alanine + ADP + phosphate + H(+). Its pathway is cell wall biogenesis; peptidoglycan biosynthesis. Its function is as follows. Cell wall formation. The protein is D-alanine--D-alanine ligase of Vibrio vulnificus (strain CMCP6).